We begin with the raw amino-acid sequence, 383 residues long: WD repeat-containing protein 55 (383 aa).

A compositionally biased stretch (basic and acidic residues) spans 1 to 11; the sequence is MDRTCEERPAE. The segment at 1–33 is disordered; that stretch reads MDRTCEERPAEDGSDEEDPDSMEAPTRIRDTPE. Acidic residues predominate over residues 12-21; it reads DGSDEEDPDS. Position 14 is a phosphoserine (serine 14). 7 WD repeats span residues 36–75, 82–121, 125–163, 166–205, 208–247, 250–289, and 293–332; these read VLEAPASGLAFHPARDLLAAGDVDGDVFVFSYSCQEGETK, HHLKACRAVAFSEDGQKLITVSKDKAIHVLDVEQGQLERR, AHGAPINSLLLVDENVLATGDDTGGICLWDQRKEGPLMD, QHEEYIADMALDPAKKLLLTASGDGCLGIFNIKRRRFELL, PQSGDLTSVTLMKWGKKVACGSSEGTIYLFNWNGFGATSD, ALRAESIDCMVPVTESLLCTGSTDGVIRAVNILPNRVVGS, and HTGEPVEELALSHCGRFLASSGHDQRLKFWDMAQLRAVVV. The residue at position 354 (serine 354) is a Phosphoserine. Residues 363–383 form a disordered region; sequence REEGEDSMAQEEKEETGDDSD. Residues 365 to 383 are compositionally biased toward acidic residues; the sequence is EGEDSMAQEEKEETGDDSD. Position 378 is a phosphothreonine (threonine 378). The residue at position 382 (serine 382) is a Phosphoserine.

It belongs to the WD repeat WDR55 family.

The protein resides in the nucleus. It localises to the nucleolus. Its subcellular location is the cytoplasm. Functionally, nucleolar protein that acts as a modulator of rRNA synthesis. Plays a central role during organogenesis. This Homo sapiens (Human) protein is WD repeat-containing protein 55 (WDR55).